The following is a 130-amino-acid chain: Succinate dehydrogenase cytochrome b556 subunit (130 aa).

The Cytoplasmic segment spans residues 1–26 (MADVNRGNRPLSPHLQVYRLPLAAIT). A helical membrane pass occupies residues 27 to 52 (SIMTRITGHALVAGIVLITWWLVAAV). Residues 53 to 68 (TSPGAFACADWVVRSW) lie on the Periplasmic side of the membrane. A helical transmembrane segment spans residues 69-89 (LGFIILTGSMWALWYHLLAGL). His84 is a heme binding site. The Cytoplasmic segment spans residues 90–109 (RHLFYDAGYGLEIEQAHKSS). Residues 110-130 (QALIAGSVVLAVLTLIVFFVF) traverse the membrane as a helical segment.

The protein belongs to the cytochrome b560 family. Part of an enzyme complex containing four subunits: a flavoprotein, an iron-sulfur protein, plus two membrane-anchoring proteins, SdhC and SdhD. The complex can form homotrimers. Heme serves as cofactor.

It is found in the cell inner membrane. It participates in carbohydrate metabolism; tricarboxylic acid cycle. In terms of biological role, membrane-anchoring subunit of succinate dehydrogenase (SDH). This Paracoccus denitrificans protein is Succinate dehydrogenase cytochrome b556 subunit (sdhC).